The following is a 251-amino-acid chain: Hydroxyacylglutathione hydrolase (251 aa).

Residues His53, His55, Asp57, His58, His110, Asp127, and His165 each contribute to the Zn(2+) site.

This sequence belongs to the metallo-beta-lactamase superfamily. Glyoxalase II family. As to quaternary structure, monomer. The cofactor is Zn(2+).

It carries out the reaction an S-(2-hydroxyacyl)glutathione + H2O = a 2-hydroxy carboxylate + glutathione + H(+). The protein operates within secondary metabolite metabolism; methylglyoxal degradation; (R)-lactate from methylglyoxal: step 2/2. Its function is as follows. Thiolesterase that catalyzes the hydrolysis of S-D-lactoyl-glutathione to form glutathione and D-lactic acid. This chain is Hydroxyacylglutathione hydrolase, found in Enterobacter sp. (strain 638).